Here is a 358-residue protein sequence, read N- to C-terminus: Oligopeptide transport ATP-binding protein OppD (358 aa).

An ABC transporter domain is found at 8 to 259 (LEVKDLAISF…PRHPYTWGLL (252 aa)). Residue 44-51 (GESGSGKS) coordinates ATP.

This sequence belongs to the ABC transporter superfamily. As to quaternary structure, the complex is composed of two ATP-binding proteins (OppD and OppF), two transmembrane proteins (OppB and OppC) and a solute-binding protein (OppA).

It is found in the cell membrane. It catalyses the reaction a [peptide](out) + ATP + H2O = a [peptide](in) + ADP + phosphate + H(+). In terms of biological role, part of the ABC transporter complex OppABCDF involved in the uptake of oligopeptides. Probably responsible for energy coupling to the transport system. Required for sporulation and genetic competence. This is Oligopeptide transport ATP-binding protein OppD from Bacillus subtilis (strain 168).